A 359-amino-acid chain; its full sequence is Peptide methionine sulfoxide reductase MsrA/MsrB (359 aa).

The interval 36 to 189 (RVIYLAGGCF…PSGYCHIDLK (154 aa)) is peptide methionine sulfoxide reductase A. The active site involves C44. The MsrB domain occupies 206 to 329 (DEVLKKKLTK…NSAALRFIPL (124 aa)). C318 acts as the Nucleophile in catalysis.

In the N-terminal section; belongs to the MsrA Met sulfoxide reductase family. It in the C-terminal section; belongs to the MsrB Met sulfoxide reductase family.

The catalysed reaction is L-methionyl-[protein] + [thioredoxin]-disulfide + H2O = L-methionyl-(S)-S-oxide-[protein] + [thioredoxin]-dithiol. It catalyses the reaction [thioredoxin]-disulfide + L-methionine + H2O = L-methionine (S)-S-oxide + [thioredoxin]-dithiol. The enzyme catalyses L-methionyl-[protein] + [thioredoxin]-disulfide + H2O = L-methionyl-(R)-S-oxide-[protein] + [thioredoxin]-dithiol. Has an important function as a repair enzyme for proteins that have been inactivated by oxidation. Catalyzes the reversible oxidation-reduction of methionine sulfoxide in proteins to methionine. This is Peptide methionine sulfoxide reductase MsrA/MsrB (msrAB) from Helicobacter pylori (strain ATCC 700392 / 26695) (Campylobacter pylori).